Here is a 181-residue protein sequence, read N- to C-terminus: Adenine phosphoribosyltransferase (181 aa).

This sequence belongs to the purine/pyrimidine phosphoribosyltransferase family. In terms of assembly, homodimer.

The protein resides in the cytoplasm. It carries out the reaction AMP + diphosphate = 5-phospho-alpha-D-ribose 1-diphosphate + adenine. It participates in purine metabolism; AMP biosynthesis via salvage pathway; AMP from adenine: step 1/1. In terms of biological role, catalyzes a salvage reaction resulting in the formation of AMP, that is energically less costly than de novo synthesis. This chain is Adenine phosphoribosyltransferase, found in Vibrio campbellii (strain ATCC BAA-1116).